We begin with the raw amino-acid sequence, 388 residues long: Angiopoietin-related protein 5 (388 aa).

The N-terminal stretch at 1 to 25 is a signal peptide; that stretch reads MMSPSQASLLFLNVCIFICGEAVQG. N-linked (GlcNAc...) asparagine glycosylation is present at asparagine 53. Residues 98 to 123 are a coiled coil; it reads LRNMMDEQQASLDYLSNQVNELMNRV. The Fibrinogen C-terminal domain maps to 141–383; the sequence is RPVQSHGLDC…SVSMKIRRMY (243 aa). N-linked (GlcNAc...) asparagine glycosylation is present at asparagine 238. Disulfide bonds link cysteine 310/cysteine 314 and cysteine 324/cysteine 338. Asparagine 329 carries N-linked (GlcNAc...) asparagine glycosylation.

As to expression, mainly expressed in adult heart.

Its subcellular location is the secreted. The sequence is that of Angiopoietin-related protein 5 (ANGPTL5) from Homo sapiens (Human).